A 400-amino-acid chain; its full sequence is Phosphoglycerate kinase (400 aa).

Substrate is bound by residues 22–24 (DLN), arginine 37, 60–63 (HLGR), arginine 119, and arginine 159. ATP is bound by residues lysine 209, glycine 297, glutamate 328, and 354–357 (GGDS).

This sequence belongs to the phosphoglycerate kinase family. Monomer.

It is found in the cytoplasm. It carries out the reaction (2R)-3-phosphoglycerate + ATP = (2R)-3-phospho-glyceroyl phosphate + ADP. The protein operates within carbohydrate degradation; glycolysis; pyruvate from D-glyceraldehyde 3-phosphate: step 2/5. The chain is Phosphoglycerate kinase from Saccharopolyspora erythraea (strain ATCC 11635 / DSM 40517 / JCM 4748 / NBRC 13426 / NCIMB 8594 / NRRL 2338).